Here is a 160-residue protein sequence, read N- to C-terminus: 3-hydroxyacyl-[acyl-carrier-protein] dehydratase FabZ (160 aa).

Residue histidine 58 is part of the active site.

This sequence belongs to the thioester dehydratase family. FabZ subfamily.

It is found in the cytoplasm. The catalysed reaction is a (3R)-hydroxyacyl-[ACP] = a (2E)-enoyl-[ACP] + H2O. In terms of biological role, involved in unsaturated fatty acids biosynthesis. Catalyzes the dehydration of short chain beta-hydroxyacyl-ACPs and long chain saturated and unsaturated beta-hydroxyacyl-ACPs. The sequence is that of 3-hydroxyacyl-[acyl-carrier-protein] dehydratase FabZ from Ruegeria sp. (strain TM1040) (Silicibacter sp.).